The chain runs to 580 residues: MSTEKLQNDDKVVDEKYVDADEHSLVRSQDESFPQTEEGGEPTDHEMKTLRRVARKIPMSCWLVAIVELSERFTYYGLSTPFQNYMQGTRDSTPKGVLGLNQSGATALSYFWQFWCYVTPIFGAWIADTYLGKYFTICIFCIVMMVGIFILFITSLPSIASETTSLAGFIVAVIVIGIGTGGIKSNVSPLIADQIPKERPSIKVLKSGERVIEDPSITVSNVFMFFYLMINIGALSVIATTELEHHVDFWAAFLLPLCFFCVGILALVLGKNKYVKVPVGEKVIARSFKCAFIALSKLNFDAARPSHHPDREFPWDDAFVDEVQRALYACKVFAFYPIYWLVYGQMNNNFVSQAGQMELHGLPNDILQAINSITLIIFIPICERIVYPFIRRYTPFRAVTKIFWGFMFGAAAMVYAGVLQHFIYKAGPCYYFPMACDPQYKNVPNHIHIALQTPCYWLIGMSEIFASITGLEYAYTKAPVTMKSFIMSIFLLMNAFGSALGIALSPVSEDPKMVWTFNGLGVSCFIAGWIFWFTYKHYNYREDEWNNLEYRHEDLYHPTETRDPELEPVVSLTRSFKQYA.

Positions 1–30 (MSTEKLQNDDKVVDEKYVDADEHSLVRSQD) are enriched in basic and acidic residues. Residues 1–45 (MSTEKLQNDDKVVDEKYVDADEHSLVRSQDESFPQTEEGGEPTDH) form a disordered region. The chain crosses the membrane as a helical span at residues 57–78 (IPMSCWLVAIVELSERFTYYGL). N-linked (GlcNAc...) asparagine glycosylation occurs at Asn-101. The next 11 membrane-spanning stretches (helical) occupy residues 107–127 (ALSY…AWIA), 134–154 (YFTI…LFIT), 163–183 (TTSL…TGGI), 219–239 (VSNV…SVIA), 249–269 (FWAA…ALVL), 326–346 (ALYA…YGQM), 370–390 (INSI…YPFI), 402–422 (IFWG…LQHF), 449–469 (IALQ…ASIT), 484–504 (SFIM…GIAL), and 513–533 (MVWT…IFWF).

It belongs to the major facilitator superfamily. Proton-dependent oligopeptide transporter (POT/PTR) (TC 2.A.17) family.

The protein resides in the cell membrane. The enzyme catalyses a dipeptide(out) + H(+)(out) = a dipeptide(in) + H(+)(in). It carries out the reaction an L-amino acid tripeptide(out) + H(+)(out) = an L-amino acid tripeptide(in) + H(+)(in). Its function is as follows. Peptide transporter that exploits the inwardly directed proton motive force to facilitate the cellular uptake of di/tripeptides. Shows strong uptake specificity towards the dipeptides Tyr-Phe and Gly-His, when compared to PTR_A and PTR_C. The polypeptide is Peptide transporter PTR_B (Candidozyma auris (Yeast)).